We begin with the raw amino-acid sequence, 430 residues long: KICSTOR complex protein kaptin (430 aa).

Residues 410–430 (RKHQQGLGDRVGPRPVEHPAS) are disordered. The span at 420-430 (VGPRPVEHPAS) shows a compositional bias: basic and acidic residues.

Part of the KICSTOR complex composed of KPTN, ITFG2, KICS2 and SZT2. SZT2 probably serves as a link between the other three proteins in the KICSTOR complex and mediates the direct interaction with the GATOR1 complex. May associate with F-actin filaments.

The protein resides in the lysosome membrane. It localises to the cell projection. Its subcellular location is the lamellipodium. The protein localises to the stereocilium. As part of the KICSTOR complex functions in the amino acid-sensing branch of the TORC1 signaling pathway. Recruits, in an amino acid-independent manner, the GATOR1 complex to the lysosomal membranes and allows its interaction with GATOR2 and the RAG GTPases. Functions upstream of the RAG GTPases and is required to negatively regulate mTORC1 signaling in absence of amino acids. In absence of the KICSTOR complex mTORC1 is constitutively localized to the lysosome and activated. The KICSTOR complex is also probably involved in the regulation of mTORC1 by glucose. The chain is KICSTOR complex protein kaptin from Mus musculus (Mouse).